Here is a 923-residue protein sequence, read N- to C-terminus: Leucine--tRNA ligase (923 aa).

The short motif at 41–52 (PYPSGEGLHVGH) is the 'HIGH' region element. The short motif at 698-702 (KMSKS) is the 'KMSKS' region element. Lys701 is a binding site for ATP.

It belongs to the class-I aminoacyl-tRNA synthetase family.

The protein localises to the cytoplasm. The catalysed reaction is tRNA(Leu) + L-leucine + ATP = L-leucyl-tRNA(Leu) + AMP + diphosphate. In Amoebophilus asiaticus (strain 5a2), this protein is Leucine--tRNA ligase.